We begin with the raw amino-acid sequence, 184 residues long: TATA-box-binding protein (184 aa).

2 repeat units span residues 9–85 and 100–178.

The protein belongs to the TBP family.

Functionally, general factor that plays a role in the activation of archaeal genes transcribed by RNA polymerase. Binds specifically to the TATA box promoter element which lies close to the position of transcription initiation. This chain is TATA-box-binding protein, found in Thermoplasma volcanium (strain ATCC 51530 / DSM 4299 / JCM 9571 / NBRC 15438 / GSS1).